Reading from the N-terminus, the 426-residue chain is MSKSENLYSAARELIPGGVNSPVRAFTGVGGTPLFIEKADGAYLYDVDGKAYIDYVGSWGPMVLGHNHPAIRNAVIEAAERGLSFGAPTEMEVKMAELVTNLVPTMDMVRMVNSGTEATMSAIRLARGFTGRDKIIKFEGCYHGHADCLLVKAGSGALTLGQPNSPGVPADFAKHTLTCTYNDLTSVRAAFEQYPQEIACIIVEPVAGNMNCVPPLPEFLPGLRALCDEFGALLIIDEVMTGFRVALAGAQDYYGVVPDLTCLGKIIGGGMPVGAFGGRRDVMDALAPTGPVYQAGTLSGNPIAMAAGFACLNEVAQPGIHETLDELTTRLAEGLLEAAEEANIPLVVNHVGGMFGIFFTDAESVTCYQDVMACDVERFKRFFHLMLEEGVYLAPSAFEAGFMSVAHSMDDINNTIDAARRVFAKL.

Lysine 265 bears the N6-(pyridoxal phosphate)lysine mark.

The protein belongs to the class-III pyridoxal-phosphate-dependent aminotransferase family. HemL subfamily. As to quaternary structure, homodimer. The cofactor is pyridoxal 5'-phosphate.

The protein localises to the cytoplasm. The catalysed reaction is (S)-4-amino-5-oxopentanoate = 5-aminolevulinate. The protein operates within porphyrin-containing compound metabolism; protoporphyrin-IX biosynthesis; 5-aminolevulinate from L-glutamyl-tRNA(Glu): step 2/2. This Salmonella typhi protein is Glutamate-1-semialdehyde 2,1-aminomutase.